The primary structure comprises 597 residues: Integrator complex subunit 11 (597 aa).

Histidine 68, histidine 70, aspartate 72, histidine 73, histidine 157, and aspartate 178 together coordinate Zn(2+). The HXHXDH motif motif lies at 68–73 (HFHLDH). Glutamate 203 is a catalytic residue. Histidine 414 is a binding site for Zn(2+). Lysine 462 serves as a coordination point for 1D-myo-inositol hexakisphosphate.

This sequence belongs to the metallo-beta-lactamase superfamily. RNA-metabolizing metallo-beta-lactamase-like family. INTS11 subfamily. As to quaternary structure, belongs to the multiprotein complex Integrator, at least composed of IntS1, IntS2, IntS3, IntS4, omd/IntS5, IntS6, defl/IntS7, IntS8, IntS9, IntS10, IntS11, IntS12, asun/IntS13, IntS14 and IntS15. The core complex associates with protein phosphatase 2A subunits mts/PP2A and Pp2A-29B, to form the Integrator-PP2A (INTAC) complex. IntS11 is part of the RNA endonuclease subcomplex, composed of IntS4, IntS9, IntS11 and inositol hexakisphosphate (InsP6). Interacts with Brat1; interaction is required for the assembly of the RNA endonuclease subcomplex and inhibits the endonuclease activity of IntS11 before formation of mature integrator complex. Zn(2+) serves as cofactor. In terms of tissue distribution, expressed in neurons and glia of the larval and adult brain.

The protein resides in the nucleus. It localises to the cytoplasm. Its subcellular location is the cytosol. The RNA endonuclease activity is inhibited by Brat1 that forms hyrogen bond and hydrophobic interactions with the active site. RNA endonuclease component of the integrator complex, a multiprotein complex that terminates RNA polymerase II (Pol II) transcription in the promoter-proximal region of genes. The integrator complex provides a quality checkpoint during transcription elongation by driving premature transcription termination of transcripts that are unfavorably configured for transcriptional elongation: the complex terminates transcription by (1) catalyzing dephosphorylation of the C-terminal domain (CTD) of Pol II subunit Polr2A/Rbp1 and Spt5, and (2) degrading the exiting nascent RNA transcript via endonuclease activity. The integrator complex is also involved in the 3'-end processing of the U7 snRNA, and also the spliceosomal snRNAs U1, U2, U4 and U5. Within the integrator complex, IntS11 constitutes the RNA endonuclease subunit that degrades exiting nascent RNA transcripts. This chain is Integrator complex subunit 11, found in Drosophila melanogaster (Fruit fly).